Reading from the N-terminus, the 307-residue chain is MmsAB operon regulatory protein (307 aa).

Positions 201 to 299 constitute an HTH araC/xylS-type domain; it reads DGLHAYMREH…GLSPSAYRQR (99 aa). DNA-binding regions (H-T-H motif) lie at residues 218–239 and 266–289; these read ERLA…KAIT and VARV…SKVM.

Its function is as follows. Regulatory protein for the mmsAB operon. Activates the transcription of the mmsAB genes. The protein is MmsAB operon regulatory protein of Pseudomonas aeruginosa (strain ATCC 15692 / DSM 22644 / CIP 104116 / JCM 14847 / LMG 12228 / 1C / PRS 101 / PAO1).